An 854-amino-acid chain; its full sequence is Glucans biosynthesis glucosyltransferase H (854 aa).

Transmembrane regions (helical) follow at residues 155–175 (ILLA…KTIL), 209–229 (ILVL…TALM), 528–548 (VFLT…FLVL), 583–603 (IALF…SVIL), 619–639 (FLSL…RMLF), 671–691 (FVRH…MAWL), and 695–715 (FLWW…VSVY).

It belongs to the glycosyltransferase 2 family. OpgH subfamily.

It localises to the cell inner membrane. Its pathway is glycan metabolism; osmoregulated periplasmic glucan (OPG) biosynthesis. Functionally, involved in the biosynthesis of osmoregulated periplasmic glucans (OPGs). This chain is Glucans biosynthesis glucosyltransferase H, found in Pectobacterium atrosepticum (strain SCRI 1043 / ATCC BAA-672) (Erwinia carotovora subsp. atroseptica).